Here is a 462-residue protein sequence, read N- to C-terminus: Nuclear factor interleukin-3-regulated protein (462 aa).

The disordered stretch occupies residues 1–22 (MQLRKMQTIKKEPAPLDPTSSS). Lys24 is covalently cross-linked (Glycyl lysine isopeptide (Lys-Gly) (interchain with G-Cter in SUMO2)). Residues 73 to 136 (DAMYWEKRRK…GLISSTAYAQ (64 aa)) enclose the bZIP domain. The segment at 79-95 (KRRKNNEAAKRSREKRR) is basic motif. Positions 99–106 (LVLENKLI) are leucine-zipper. The disordered stretch occupies residues 188–214 (SDVSEVSSVEHTQESPAQGGCRSPENK). Lys214 is covalently cross-linked (Glycyl lysine isopeptide (Lys-Gly) (interchain with G-Cter in SUMO2)). Lys219 is covalently cross-linked (Glycyl lysine isopeptide (Lys-Gly) (interchain with G-Cter in SUMO1); alternate). Lys219 participates in a covalent cross-link: Glycyl lysine isopeptide (Lys-Gly) (interchain with G-Cter in SUMO2); alternate. The interval 259–298 (PPLLQVHGSTSNSPRTSEADEGVVGKSSDGEDEQQVPKGP) is disordered. A compositionally biased stretch (polar residues) spans 265-274 (HGSTSNSPRT). Positions 281–420 (VVGKSSDGED…FKTGVVEVKD (140 aa)) are necessary for transcriptional repression and sufficient for interaction with PER2. At Ser301 the chain carries Phosphoserine. Residues Lys314, Lys326, Lys332, Lys337, and Lys350 each participate in a glycyl lysine isopeptide (Lys-Gly) (interchain with G-Cter in SUMO2) cross-link. Ser353 is modified (phosphoserine). Glycyl lysine isopeptide (Lys-Gly) (interchain with G-Cter in SUMO2) cross-links involve residues Lys360, Lys394, Lys401, Lys406, Lys412, Lys419, Lys424, Lys434, and Lys448.

The protein belongs to the bZIP family. NFIL3 subfamily. In terms of assembly, homodimer. Binds DNA as a dimer. Interacts with DR1. Interacts with PER2 and CRY2. Interacts with NR0B2. Interacts with NR1D1. Interacts with MYSM1. Expressed in suprachiasmatic nucleus and liver (at protein level). Expressed in suprachiasmatic nucleus, hippocampus, gyrus dentatus, piriform cortex, internal granular layer of olfactory bulb, dorsomedial hypothalamic nucleus, pontine nuclei, granular layer of cerebellum, liver and calvariae osteoblasts. Expressed in natural killer cell precursors in bone marrow.

Its subcellular location is the nucleus. Functionally, acts as a transcriptional regulator that recognizes and binds to the sequence 5'-[GA]TTA[CT]GTAA[CT]-3', a sequence present in many cellular and viral promoters. Represses transcription from promoters with activating transcription factor (ATF) sites. Represses promoter activity in osteoblasts. Represses transcriptional activity of PER1. Represses transcriptional activity of PER2 via the B-site on the promoter. Activates transcription from the interleukin-3 promoter in T-cells. Competes for the same consensus-binding site with PAR DNA-binding factors (DBP, HLF and TEF). Component of the circadian clock that acts as a negative regulator for the circadian expression of PER2 oscillation in the cell-autonomous core clock. Protects pro-B cells from programmed cell death. Represses the transcription of CYP2A5. Positively regulates the expression and activity of CES2 by antagonizing the repressive action of NR1D1 on CES2. Required for the development of natural killer cell precursors. The protein is Nuclear factor interleukin-3-regulated protein (Nfil3) of Mus musculus (Mouse).